The chain runs to 387 residues: GTPase Obg (387 aa).

The 159-residue stretch at 1–159 folds into the Obg domain; it reads MKFVDEAIIR…RSLKLELLLL (159 aa). The OBG-type G domain occupies 160–333; sequence ADVGLLGMPN…LALKLLDFID (174 aa). GTP is bound by residues 166–173, 191–195, 213–216, 283–286, and 314–316; these read GMPNAGKS, FTTLV, DIPG, NKAD, and SAY. Ser-173 and Thr-193 together coordinate Mg(2+).

Belongs to the TRAFAC class OBG-HflX-like GTPase superfamily. OBG GTPase family. As to quaternary structure, monomer. It depends on Mg(2+) as a cofactor.

It is found in the cytoplasm. In terms of biological role, an essential GTPase which binds GTP, GDP and possibly (p)ppGpp with moderate affinity, with high nucleotide exchange rates and a fairly low GTP hydrolysis rate. Plays a role in control of the cell cycle, stress response, ribosome biogenesis and in those bacteria that undergo differentiation, in morphogenesis control. This chain is GTPase Obg, found in Shewanella pealeana (strain ATCC 700345 / ANG-SQ1).